A 244-amino-acid chain; its full sequence is tRNA (guanine-N(1)-)-methyltransferase (244 aa).

Residues Gly120 and 140–145 (IGDYIL) contribute to the S-adenosyl-L-methionine site.

It belongs to the RNA methyltransferase TrmD family. Homodimer.

It is found in the cytoplasm. It catalyses the reaction guanosine(37) in tRNA + S-adenosyl-L-methionine = N(1)-methylguanosine(37) in tRNA + S-adenosyl-L-homocysteine + H(+). Specifically methylates guanosine-37 in various tRNAs. This is tRNA (guanine-N(1)-)-methyltransferase from Brucella abortus (strain S19).